A 175-amino-acid chain; its full sequence is MSTLNKLQRPARSWHRKKRVGRGQGSGLGKTAGRGGKGQKARTGNMRFEGFEGGQSPLQRRLPKFGFTPPNRTVYAVVNLSDLEQHFDAGATADVETLRKVGLVKGRYHGVKLLARGELTKKVTVVVHKASEAAKAAIQKAGGAVEEIPLVAHKPESAAKAHAGKGVKAPRQPKA.

Disordered regions lie at residues 1-65 and 155-175; these read MSTL…LPKF and PESA…QPKA. The span at 12–21 shows a compositional bias: basic residues; that stretch reads RSWHRKKRVG. The segment covering 22 to 38 has biased composition (gly residues); sequence RGQGSGLGKTAGRGGKG. Over residues 160–169 the composition is skewed to low complexity; that stretch reads KAHAGKGVKA.

Belongs to the universal ribosomal protein uL15 family. Part of the 50S ribosomal subunit.

Binds to the 23S rRNA. This is Large ribosomal subunit protein uL15 from Myxococcus xanthus (strain DK1622).